Reading from the N-terminus, the 339-residue chain is Dual specificity protein phosphatase 12 (339 aa).

M1 carries the N-acetylmethionine modification. Positions 1–22 (MLEVQSSNHGCERQAPTTSPAS) are enriched in polar residues. The tract at residues 1 to 25 (MLEVQSSNHGCERQAPTTSPASSAG) is disordered. The Tyrosine-protein phosphatase domain occupies 26-170 (HAVEVRPGLY…LKLYEAMGHE (145 aa)). The Phosphocysteine intermediate role is filled by C114. 115–120 (HAGVSR) contacts substrate. S334 bears the Phosphoserine mark.

Belongs to the protein-tyrosine phosphatase family. Non-receptor class dual specificity subfamily. As to quaternary structure, monomer. The cofactor is Zn(2+).

It is found in the nucleus. The protein localises to the cytoplasm. Its subcellular location is the cytosol. The enzyme catalyses O-phospho-L-tyrosyl-[protein] + H2O = L-tyrosyl-[protein] + phosphate. The catalysed reaction is O-phospho-L-seryl-[protein] + H2O = L-seryl-[protein] + phosphate. It carries out the reaction O-phospho-L-threonyl-[protein] + H2O = L-threonyl-[protein] + phosphate. Its function is as follows. Dual specificity phosphatase; can dephosphorylate both phosphotyrosine and phosphoserine or phosphothreonine residues. Can dephosphorylate glucokinase (in vitro). Has phosphatase activity with the synthetic substrate 6,8-difluoro-4-methylumbelliferyl phosphate and other in vitro substrates. This Rattus norvegicus (Rat) protein is Dual specificity protein phosphatase 12 (Dusp12).